Here is a 303-residue protein sequence, read N- to C-terminus: Protease HtpX homolog (303 aa).

The next 2 membrane-spanning stretches (helical) occupy residues 19 to 39 and 41 to 61; these read IIIF…VSYF and LGEF…YYAY. Position 146 (H146) interacts with Zn(2+). Residue E147 is part of the active site. H150 lines the Zn(2+) pocket. Transmembrane regions (helical) follow at residues 156 to 176 and 192 to 212; these read VRLQ…GDSL and NILG…ATLL. E221 contributes to the Zn(2+) binding site.

Belongs to the peptidase M48B family. Zn(2+) is required as a cofactor.

The protein resides in the cell inner membrane. This Dictyoglomus thermophilum (strain ATCC 35947 / DSM 3960 / H-6-12) protein is Protease HtpX homolog.